Reading from the N-terminus, the 181-residue chain is Alkyl hydroperoxide reductase AhpD (181 aa).

The active-site Proton donor is the Cys131. An intrachain disulfide couples Cys131 to Cys134. Cys134 functions as the Cysteine sulfenic acid (-SOH) intermediate in the catalytic mechanism.

This sequence belongs to the AhpD family.

It catalyses the reaction N(6)-[(R)-dihydrolipoyl]-L-lysyl-[lipoyl-carrier protein] + a hydroperoxide = N(6)-[(R)-lipoyl]-L-lysyl-[lipoyl-carrier protein] + an alcohol + H2O. Antioxidant protein with alkyl hydroperoxidase activity. Required for the reduction of the AhpC active site cysteine residues and for the regeneration of the AhpC enzyme activity. In Azorhizobium caulinodans (strain ATCC 43989 / DSM 5975 / JCM 20966 / LMG 6465 / NBRC 14845 / NCIMB 13405 / ORS 571), this protein is Alkyl hydroperoxide reductase AhpD.